A 289-amino-acid polypeptide reads, in one-letter code: 4-hydroxy-tetrahydrodipicolinate synthase (289 aa).

Residue T43 coordinates pyruvate. Y131 serves as the catalytic Proton donor/acceptor. K160 acts as the Schiff-base intermediate with substrate in catalysis. V200 provides a ligand contact to pyruvate.

It belongs to the DapA family. Homotetramer; dimer of dimers.

It is found in the cytoplasm. It carries out the reaction L-aspartate 4-semialdehyde + pyruvate = (2S,4S)-4-hydroxy-2,3,4,5-tetrahydrodipicolinate + H2O + H(+). Its pathway is amino-acid biosynthesis; L-lysine biosynthesis via DAP pathway; (S)-tetrahydrodipicolinate from L-aspartate: step 3/4. Catalyzes the condensation of (S)-aspartate-beta-semialdehyde [(S)-ASA] and pyruvate to 4-hydroxy-tetrahydrodipicolinate (HTPA). In Methanococcus maripaludis (strain C6 / ATCC BAA-1332), this protein is 4-hydroxy-tetrahydrodipicolinate synthase.